A 212-amino-acid chain; its full sequence is Large ribosomal subunit protein uL3 (212 aa).

The interval 119–147 (YQGNIKRWGQSRGPETHGSRYHRIPGSMG) is disordered.

This sequence belongs to the universal ribosomal protein uL3 family. Part of the 50S ribosomal subunit. Forms a cluster with proteins L14 and L19.

In terms of biological role, one of the primary rRNA binding proteins, it binds directly near the 3'-end of the 23S rRNA, where it nucleates assembly of the 50S subunit. The protein is Large ribosomal subunit protein uL3 of Lactobacillus acidophilus (strain ATCC 700396 / NCK56 / N2 / NCFM).